A 1765-amino-acid polypeptide reads, in one-letter code: Tight junction protein ZO-1 (1765 aa).

A PDZ 1 domain is found at 23–110; that stretch reads TVTLHRAPGF…NAKITIRRKK (88 aa). The span at 102–112 shows a compositional bias: basic residues; it reads AKITIRRKKKV. The disordered stretch occupies residues 102–189; that stretch reads AKITIRRKKK…QPAKPTKVTL (88 aa). The segment covering 123 to 136 has biased composition (acidic residues); sequence PVSDNEDDSYDEDV. At Ser125 the chain carries Phosphoserine. Position 132 is a phosphotyrosine (Tyr132). Over residues 149–175 the composition is skewed to basic and acidic residues; that stretch reads RRGEKSWARDRSASRDRSLSPRSDRRS. Ser175, Ser178, and Ser179 each carry phosphoserine. Thr185 is modified (phosphothreonine). Positions 186-264 constitute a PDZ 2 domain; sequence KVTLVKSRKN…KLKMVVQRDE (79 aa). 2 positions are modified to phosphoserine: Ser212 and Ser241. At Thr267 the chain carries Phosphothreonine. A phosphoserine mark is found at Ser275, Ser277, Ser280, Ser284, Ser290, Ser294, Ser297, Ser300, Ser323, Ser329, Ser334, Ser337, and Ser353. Residues 296-363 form a disordered region; the sequence is ASDHSVRSHD…TPVKHVDDHT (68 aa). Positions 299–308 are enriched in basic and acidic residues; it reads HSVRSHDRPP. The span at 325–338 shows a compositional bias: polar residues; that stretch reads HSTQSPQQPSNGSL. Thr354 carries the post-translational modification Phosphothreonine. Positions 421-502 constitute a PDZ 3 domain; sequence SMKLVKFRKG…GEEVTILAQK (82 aa). Residues 516 to 584 form the SH3 domain; that stretch reads GDSFYIRTHF…PNKNRAEQLA (69 aa). Phosphoserine is present on residues Ser617 and Ser622. An occludin (OCLN)-binding region region spans residues 633 to 876; the sequence is YERVVLREAG…GTPPESAITR (244 aa). In terms of domain architecture, Guanylate kinase-like spans 690 to 791; the sequence is RLHTIKQIID…WYGALKEAIQ (102 aa). Thr809 carries the phosphothreonine modification. A phosphoserine mark is found at Ser810 and Ser821. The residue at position 822 (Tyr822) is a Phosphotyrosine. 3 positions are modified to phosphoserine: Ser824, Ser828, and Ser837. Disordered stretches follow at residues 825–941 and 1023–1042; these read APGS…PASS and ALGHPGQRLDKEPNPAYDPQ. Phosphothreonine is present on residues Thr846, Thr848, Thr854, Thr861, and Thr868. Positions 879–892 are enriched in basic and acidic residues; it reads EPVREDSSGMHHEN. The segment covering 893-906 has biased composition (low complexity); the sequence is QTYPPYSPQAQPQA. Ser912 carries the post-translational modification Phosphoserine. Position 1071 is a phosphoserine (Ser1071). The tract at residues 1092–1585 is disordered; the sequence is SYYDDKQPYP…SSTQPPEFDS (494 aa). Residues 1106 to 1124 are compositionally biased toward basic and acidic residues; the sequence is DTQHPRDLDSRQHPEEASE. Residues Tyr1139 and Tyr1164 each carry the phosphotyrosine modification. An actin-binding region (ABR) region spans residues 1150–1370; that stretch reads RTSTLRHEEQ…FDRRSFESKP (221 aa). Basic and acidic residues-rich tracts occupy residues 1268-1285 and 1335-1346; these read KMFENKRSASLENKKDVN and PPEDIVRSNHYD. Phosphotyrosine is present on Tyr1353. Ser1365 is modified (phosphoserine). Over residues 1388–1399 the composition is skewed to low complexity; sequence SQSQPNFSSYSS. A compositionally biased stretch (basic and acidic residues) spans 1401 to 1418; the sequence is GKPETDAMDRSFSEKRYD. Ser1411 carries the phosphoserine modification. Composition is skewed to polar residues over residues 1442-1468 and 1509-1519; these read NSSLHIHSKAAQSEGNSVSLDFQNSYI and GAEQTQKTITP. Positions 1535 to 1544 are enriched in basic and acidic residues; the sequence is PFERKFESPK. Phosphoserine is present on residues Ser1542 and Ser1614. Residues 1631–1765 enclose the ZU5 domain; sequence ATARGIFNSN…NCVSVLIDHF (135 aa).

It belongs to the MAGUK family. As to quaternary structure, homodimer. Forms heterodimers TJP3. Forms a heterodimer (via PDZ2 domain) with TJP2/ZO2 (via PDZ2 domain). Interacts with OCLN. Interacts with CALM, claudins, CGN/cingulin, CXADR, GJA12, GJD3 and UBN1. Interacts (via ZU5 domain) with CDC42BPB and MYZAP. Interacts (via PDZ domain) with GJA1. Interacts (via PDZ domains) with ANKRD2. Interacts with BVES (via the C-terminus cytoplasmic tail). Interacts with HSPA4. Interacts with KIRREL1. Interacts with DLL1. Interacts with USP53 (via the C-terminal region). Interacts with DNMBP (via C-terminal domain); required for the apical cell-cell junction localization of DNMBP. Interacts with SPEF1. Interacts (via N-terminus) with CTNNA1. Interacts with CLDN18. Interacts with CLDN16 (via TRV motif); this is a prerequisite for anchoring of CLDN16 at the tight junction. Interacts with PKP1; the interaction facilitates TJP1/ZO-1 localization to the plasma membrane. In terms of processing, phosphorylated at tyrosine redidues in response to epidermal growth factor (EGF). This response is dependent on an intact actin microfilament system. Dephosphorylated by Ptprj.

It localises to the cell membrane. It is found in the cell junction. The protein localises to the tight junction. Its subcellular location is the gap junction. In terms of biological role, tjpP1, Tjp2, and Tjp3 are closely related scaffolding proteins that link tight junction (TJ) transmembrane proteins such as claudins, junctional adhesion molecules, and occludin to the actin cytoskeleton. The tight junction acts to limit movement of substances through the paracellular space and as a boundary between the compositionally distinct apical and basolateral plasma membrane domains of epithelial and endothelial cells. Necessary for lumenogenesis, and particularly efficient epithelial polarization and barrier formation. Plays a role in the regulation of cell migration by targeting Cdc42bpb to the leading edge of migrating cells. Plays an important role in podosome formation and associated function, thus regulating cell adhesion and matrix remodeling. With Tjp2 and Tjp3, participates in the junctional retention and stability of the transcription factor Dbpa, but is not involved in its shuttling to the nucleus. May play a role in mediating cell morphology changes during ameloblast differentiation via its role in tight junctions. This chain is Tight junction protein ZO-1, found in Rattus norvegicus (Rat).